The chain runs to 518 residues: Envelope protein (518 aa).

A signal peptide spans 1-31; that stretch reads MSVNRSSIKSLLMVFMIVSSSLLAPVGGAAA. Residues 32–485 are Extracellular-facing; it reads DEFRTPAASD…IEDREPEAGG (454 aa). Residue N213 is glycosylated (N-linked (GlcNAc...) (hybrid) asparagine; by host). The chain crosses the membrane as a helical span at residues 486 to 506; sequence FFGSGSTDTMLVGLLALAGVL. At 507-518 the chain is on the cytoplasmic side; sequence LLAQSNNRGGRR.

Post-translationally, N-glycosylated by a pentasaccharide comprising glucose, glucuronic acid and a terminal 5-N-formyl-legionaminic acid residue.

It localises to the virion membrane. In terms of biological role, envelope protein that may play a role in host-cell attachment and viral genome entry. In Halorubrum sp. PV6 (HRPV-1), this protein is Envelope protein.